Here is a 380-residue protein sequence, read N- to C-terminus: uncharacterized protein (380 aa).

In terms of domain architecture, Peptidase M14 spans 111–369 (APYSMERHHD…DCLAILAEMI (259 aa)). Histidine 164, glutamate 167, and histidine 257 together coordinate Zn(2+). Catalysis depends on glutamate 333, which acts as the Proton donor/acceptor.

Zn(2+) serves as cofactor.

This is an uncharacterized protein from Zymomonas mobilis subsp. mobilis (strain ATCC 31821 / ZM4 / CP4).